Reading from the N-terminus, the 250-residue chain is Beta-crystallin B1 (250 aa).

The tract at residues 1–47 (MSQVAKAAATTAVNPGPDGKGKGTPSTGTAPAPGPTPVPASVPRPAA) is disordered. An N-acetylserine modification is found at S2. The N-terminal arm stretch occupies residues 2–56 (SQVAKAAATTAVNPGPDGKGKGTPSTGTAPAPGPTPVPASVPRPAAKVGELPPGS). Positions 32-42 (APGPTPVPASV) are enriched in pro residues. 2 consecutive Beta/gamma crystallin 'Greek key' domains span residues 57–96 (YRLV…IVLS) and 97–141 (GPWV…RPIR). The segment at 142 to 146 (MDSQE) is connecting peptide. Beta/gamma crystallin 'Greek key' domains are found at residues 147–188 (HKIC…TVSS) and 189–231 (GTWV…RRLR). Residues 233 to 250 (RQWHQEGCFPVLTAEPPK) form a C-terminal arm region.

It belongs to the beta/gamma-crystallin family. Homo/heterodimer, or complexes of higher-order. The structure of beta-crystallin oligomers seems to be stabilized through interactions between the N-terminal arms. Post-translationally, specific cleavages in the N-terminal arm occur during lens maturation and give rise to truncated forms, leading to impaired oligomerization and protein insolubilization. The protease responsible for this partial degradation could be calpain II.

Crystallins are the dominant structural components of the vertebrate eye lens. The sequence is that of Beta-crystallin B1 (Crybb1) from Rattus norvegicus (Rat).